We begin with the raw amino-acid sequence, 409 residues long: Peptidase T (409 aa).

His78 provides a ligand contact to Zn(2+). Asp80 is a catalytic residue. Asp140 contacts Zn(2+). The active-site Proton acceptor is the Glu173. Zn(2+) is bound by residues Glu174, Asp196, and His379.

Belongs to the peptidase M20B family. The cofactor is Zn(2+).

Its subcellular location is the cytoplasm. It catalyses the reaction Release of the N-terminal residue from a tripeptide.. In terms of biological role, cleaves the N-terminal amino acid of tripeptides. This chain is Peptidase T, found in Salmonella paratyphi C (strain RKS4594).